We begin with the raw amino-acid sequence, 221 residues long: Enolase-phosphatase E1 (221 aa).

Belongs to the HAD-like hydrolase superfamily. MasA/MtnC family. As to quaternary structure, monomer. It depends on Mg(2+) as a cofactor.

It catalyses the reaction 5-methylsulfanyl-2,3-dioxopentyl phosphate + H2O = 1,2-dihydroxy-5-(methylsulfanyl)pent-1-en-3-one + phosphate. Its pathway is amino-acid biosynthesis; L-methionine biosynthesis via salvage pathway; L-methionine from S-methyl-5-thio-alpha-D-ribose 1-phosphate: step 3/6. It participates in amino-acid biosynthesis; L-methionine biosynthesis via salvage pathway; L-methionine from S-methyl-5-thio-alpha-D-ribose 1-phosphate: step 4/6. Its function is as follows. Bifunctional enzyme that catalyzes the enolization of 2,3-diketo-5-methylthiopentyl-1-phosphate (DK-MTP-1-P) into the intermediate 2-hydroxy-3-keto-5-methylthiopentenyl-1-phosphate (HK-MTPenyl-1-P), which is then dephosphorylated to form the acireductone 1,2-dihydroxy-3-keto-5-methylthiopentene (DHK-MTPene). In Hydrogenobaculum sp. (strain Y04AAS1), this protein is Enolase-phosphatase E1.